Consider the following 1124-residue polypeptide: Angiopoietin-1 receptor (1124 aa).

An N-terminal signal peptide occupies residues 1 to 22; the sequence is MDSLASLVLCGVSLLLSGTVEG. The Extracellular portion of the chain corresponds to 23–748; that stretch reads AMDLILINSL…ADLGGGKMLL (726 aa). Cysteine 44 and cysteine 102 form a disulfide bridge. One can recognise an Ig-like C2-type 1 domain in the interval 44–123; sequence CIASGWRPHE…RTMKMRQQAS (80 aa). Asparagine 140 and asparagine 158 each carry an N-linked (GlcNAc...) asparagine glycan. EGF-like domains are found at residues 210–252, 254–299, and 301–341; these read RCEA…RTCE, ACEL…LQCN, and ACHP…LQCE. Cystine bridges form between cysteine 211/cysteine 220, cysteine 224/cysteine 233, cysteine 227/cysteine 240, cysteine 242/cysteine 251, cysteine 255/cysteine 264, cysteine 268/cysteine 274, cysteine 280/cysteine 287, cysteine 289/cysteine 298, cysteine 302/cysteine 311, cysteine 315/cysteine 323, cysteine 317/cysteine 329, cysteine 331/cysteine 340, and cysteine 370/cysteine 424. One can recognise an Ig-like C2-type 2 domain in the interval 350–440; sequence PKIVDLPDHI…GMVEKPFNIS (91 aa). Residues asparagine 399, asparagine 438, asparagine 464, asparagine 560, asparagine 596, asparagine 649, and asparagine 691 are each glycosylated (N-linked (GlcNAc...) asparagine). Fibronectin type-III domains follow at residues 447-541, 545-636, and 641-735; these read PLNA…TASI, PPRG…TLSD, and QPEN…LPES. Residues 749 to 769 traverse the membrane as a helical segment; the sequence is IAILGSAGMTCLTVLLAFLII. At 770 to 1124 the chain is on the cytoplasmic side; that stretch reads LQLKRANVQR…GIDCSAEEAA (355 aa). The Protein kinase domain maps to 824-1096; the sequence is IKFQDVIGEG…QILVSLNRML (273 aa). ATP contacts are provided by residues 830-838 and lysine 855; that span reads IGEGNFGQV. Tyrosine 860 is subject to Phosphotyrosine; by autocatalysis. The active-site Proton acceptor is the aspartate 964. A phosphotyrosine; by autocatalysis mark is found at tyrosine 992, tyrosine 1102, and tyrosine 1108.

It belongs to the protein kinase superfamily. Tyr protein kinase family. Tie subfamily. As to quaternary structure, homodimer. Heterodimer with TIE1. Interacts with ANGPT1, ANGPT2 and ANGPT4. At cell-cell contacts in quiescent cells, forms a signaling complex composed of ANGPT1 plus TEK molecules from two adjoining cells. In the absence of endothelial cell-cell contacts, interaction with ANGPT1 mediates contacts with the extracellular matrix. Interacts with PTPRB; this promotes endothelial cell-cell adhesion. Interacts with DOK2, GRB2, GRB7, GRB14, PIK3R1 and PTPN11/SHP2. Colocalizes with DOK2 at contacts with the extracellular matrix in migrating cells. Interacts (tyrosine phosphorylated) with TNIP2. Interacts (tyrosine phosphorylated) with SHC1 (via SH2 domain). Post-translationally, proteolytic processing leads to the shedding of the extracellular domain (soluble TIE-2 alias sTIE-2). Autophosphorylated on tyrosine residues in response to ligand binding. Autophosphorylation occurs in trans, i.e. one subunit of the dimeric receptor phosphorylates tyrosine residues on the other subunit. Autophosphorylation occurs in a sequential manner, where Tyr-992 in the kinase activation loop is phosphorylated first, followed by autophosphorylation at Tyr-1108 and at additional tyrosine residues. ANGPT1-induced phosphorylation is impaired during hypoxia, due to increased expression of ANGPT2. Phosphorylation is important for interaction with GRB14, PIK3R1 and PTPN11. Phosphorylation at Tyr-1102 is important for interaction with SHC1, GRB2 and GRB7. Phosphorylation at Tyr-1108 is important for interaction with DOK2 and for coupling to downstream signal transduction pathways in endothelial cells. Dephosphorylated by PTPRB. In terms of processing, ubiquitinated. The phosphorylated receptor is ubiquitinated and internalized, leading to its degradation. Detected in umbilical vein endothelial cells. Proteolytic processing gives rise to a soluble extracellular domain that is detected in blood plasma (at protein level). Predominantly expressed in endothelial cells and their progenitors, the angioblasts. Has been directly found in placenta and lung, with a lower level in umbilical vein endothelial cells, brain and kidney.

It is found in the cell membrane. The protein resides in the cell junction. Its subcellular location is the focal adhesion. The protein localises to the cytoplasm. It localises to the cytoskeleton. It is found in the secreted. It carries out the reaction L-tyrosyl-[protein] + ATP = O-phospho-L-tyrosyl-[protein] + ADP + H(+). With respect to regulation, angiopoietin binding leads to receptor dimerization and activation by autophosphorylation at Tyr-992 on the kinase activation loop. Inhibited by staurosporine, K252a, PP2, damnacanthal, SB203580, CEP-11207, CEP-11981 and CE-245677. Inhibited by triazine, thienopyrimidine and thiazolopyrimidine derivatives. Its function is as follows. Tyrosine-protein kinase that acts as a cell-surface receptor for ANGPT1, ANGPT2 and ANGPT4 and regulates angiogenesis, endothelial cell survival, proliferation, migration, adhesion and cell spreading, reorganization of the actin cytoskeleton, but also maintenance of vascular quiescence. Has anti-inflammatory effects by preventing the leakage of pro-inflammatory plasma proteins and leukocytes from blood vessels. Required for normal angiogenesis and heart development during embryogenesis. Required for post-natal hematopoiesis. After birth, activates or inhibits angiogenesis, depending on the context. Inhibits angiogenesis and promotes vascular stability in quiescent vessels, where endothelial cells have tight contacts. In quiescent vessels, ANGPT1 oligomers recruit TEK to cell-cell contacts, forming complexes with TEK molecules from adjoining cells, and this leads to preferential activation of phosphatidylinositol 3-kinase and the AKT1 signaling cascades. In migrating endothelial cells that lack cell-cell adhesions, ANGT1 recruits TEK to contacts with the extracellular matrix, leading to the formation of focal adhesion complexes, activation of PTK2/FAK and of the downstream kinases MAPK1/ERK2 and MAPK3/ERK1, and ultimately to the stimulation of sprouting angiogenesis. ANGPT1 signaling triggers receptor dimerization and autophosphorylation at specific tyrosine residues that then serve as binding sites for scaffold proteins and effectors. Signaling is modulated by ANGPT2 that has lower affinity for TEK, can promote TEK autophosphorylation in the absence of ANGPT1, but inhibits ANGPT1-mediated signaling by competing for the same binding site. Signaling is also modulated by formation of heterodimers with TIE1, and by proteolytic processing that gives rise to a soluble TEK extracellular domain. The soluble extracellular domain modulates signaling by functioning as decoy receptor for angiopoietins. TEK phosphorylates DOK2, GRB7, GRB14, PIK3R1; SHC1 and TIE1. The chain is Angiopoietin-1 receptor from Homo sapiens (Human).